Here is a 272-residue protein sequence, read N- to C-terminus: Shikimate dehydrogenase (NADP(+)) (272 aa).

Residues 16-18 (SLS) and Thr-63 contribute to the shikimate site. The active-site Proton acceptor is the Lys-67. Glu-79 contacts NADP(+). Asn-88 and Asp-103 together coordinate shikimate. Residues 127 to 131 (GAGGA), 151 to 156 (NRTMSR), and Ile-212 contribute to the NADP(+) site. Residue Tyr-214 coordinates shikimate. Gly-235 contributes to the NADP(+) binding site.

Belongs to the shikimate dehydrogenase family. As to quaternary structure, homodimer.

The enzyme catalyses shikimate + NADP(+) = 3-dehydroshikimate + NADPH + H(+). It participates in metabolic intermediate biosynthesis; chorismate biosynthesis; chorismate from D-erythrose 4-phosphate and phosphoenolpyruvate: step 4/7. Involved in the biosynthesis of the chorismate, which leads to the biosynthesis of aromatic amino acids. Catalyzes the reversible NADPH linked reduction of 3-dehydroshikimate (DHSA) to yield shikimate (SA). The protein is Shikimate dehydrogenase (NADP(+)) of Staphylococcus epidermidis (strain ATCC 12228 / FDA PCI 1200).